The primary structure comprises 314 residues: 2,3-dihydroxyphenylpropionate/2,3-dihydroxicinnamic acid 1,2-dioxygenase (314 aa).

The active-site Proton donor is the histidine 115. Histidine 179 acts as the Proton acceptor in catalysis.

This sequence belongs to the LigB/MhpB extradiol dioxygenase family. Homotetramer. Requires Fe(2+) as cofactor.

It carries out the reaction 3-(2,3-dihydroxyphenyl)propanoate + O2 = (2Z,4E)-2-hydroxy-6-oxonona-2,4-dienedioate + H(+). The catalysed reaction is (2E)-3-(2,3-dihydroxyphenyl)prop-2-enoate + O2 = (2Z,4E,7E)-2-hydroxy-6-oxonona-2,4,7-trienedioate + H(+). It participates in aromatic compound metabolism; 3-phenylpropanoate degradation. Its function is as follows. Catalyzes the non-heme iron(II)-dependent oxidative cleavage of 2,3-dihydroxyphenylpropionic acid and 2,3-dihydroxicinnamic acid into 2-hydroxy-6-ketononadienedioate and 2-hydroxy-6-ketononatrienedioate, respectively. The polypeptide is 2,3-dihydroxyphenylpropionate/2,3-dihydroxicinnamic acid 1,2-dioxygenase (Klebsiella pneumoniae subsp. pneumoniae (strain ATCC 700721 / MGH 78578)).